The chain runs to 570 residues: Proline--tRNA ligase (570 aa).

Belongs to the class-II aminoacyl-tRNA synthetase family. ProS type 1 subfamily. Homodimer.

It localises to the cytoplasm. The catalysed reaction is tRNA(Pro) + L-proline + ATP = L-prolyl-tRNA(Pro) + AMP + diphosphate. Functionally, catalyzes the attachment of proline to tRNA(Pro) in a two-step reaction: proline is first activated by ATP to form Pro-AMP and then transferred to the acceptor end of tRNA(Pro). As ProRS can inadvertently accommodate and process non-cognate amino acids such as alanine and cysteine, to avoid such errors it has two additional distinct editing activities against alanine. One activity is designated as 'pretransfer' editing and involves the tRNA(Pro)-independent hydrolysis of activated Ala-AMP. The other activity is designated 'posttransfer' editing and involves deacylation of mischarged Ala-tRNA(Pro). The misacylated Cys-tRNA(Pro) is not edited by ProRS. The protein is Proline--tRNA ligase of Shewanella sp. (strain MR-7).